The primary structure comprises 423 residues: Lysosomal acid phosphatase (423 aa).

The N-terminal stretch at 1-30 (MAGKRSGWSRAALLQLLLGVNLVVMPPTRA) is a signal peptide. At 31–380 (RSLRFVTLLY…QLASGPADTE (350 aa)) the chain is on the lumenal side. H42 acts as the Nucleophile in catalysis. N92, N133, N167, N177, N191, and N267 each carry an N-linked (GlcNAc...) asparagine glycan. Intrachain disulfides connect C159/C370, C212/C310, and C345/C349. D287 acts as the Proton donor in catalysis. 2 N-linked (GlcNAc...) asparagine glycosylation sites follow: N322 and N331. The helical transmembrane segment at 381 to 401 (VIVALAVCGSILFLLIVLLLT) threads the bilayer. The Cytoplasmic portion of the chain corresponds to 402–423 (VLFRMQAQPPGYRHVADGEDHA).

Belongs to the histidine acid phosphatase family. The membrane-bound form is converted to the soluble form by sequential proteolytic processing. First, the C-terminal cytoplasmic tail is removed. Cleavage by a lysosomal protease releases the soluble form in the lysosome lumen. In terms of processing, N-glycosylated. The intermediates formed during enzymatic deglycosylation suggest that all eight predicted N-glycosylation sites are used.

It is found in the lysosome membrane. It localises to the lysosome lumen. The catalysed reaction is a phosphate monoester + H2O = an alcohol + phosphate. The chain is Lysosomal acid phosphatase (ACP2) from Homo sapiens (Human).